A 39-amino-acid polypeptide reads, in one-letter code: Cytochrome b559 subunit beta (39 aa).

Residues 14–30 (WLAVHGLAVPTVFFLGA) form a helical membrane-spanning segment. Histidine 18 is a binding site for heme.

The protein belongs to the PsbE/PsbF family. As to quaternary structure, heterodimer of an alpha subunit and a beta subunit. PSII is composed of 1 copy each of membrane proteins PsbA, PsbB, PsbC, PsbD, PsbE, PsbF, PsbH, PsbI, PsbJ, PsbK, PsbL, PsbM, PsbT, PsbX, PsbY, PsbZ, Psb30/Ycf12, at least 3 peripheral proteins of the oxygen-evolving complex and a large number of cofactors. It forms dimeric complexes. The cofactor is heme b.

It is found in the plastid. The protein localises to the chloroplast thylakoid membrane. In terms of biological role, this b-type cytochrome is tightly associated with the reaction center of photosystem II (PSII). PSII is a light-driven water:plastoquinone oxidoreductase that uses light energy to abstract electrons from H(2)O, generating O(2) and a proton gradient subsequently used for ATP formation. It consists of a core antenna complex that captures photons, and an electron transfer chain that converts photonic excitation into a charge separation. The protein is Cytochrome b559 subunit beta of Physcomitrium patens (Spreading-leaved earth moss).